A 968-amino-acid chain; its full sequence is RNA polymerase-associated protein RapA (968 aa).

Positions 164 to 334 (DVGRRHAPRV…FARLRLLDPN (171 aa)) constitute a Helicase ATP-binding domain. 177 to 184 (DEVGLGKT) is an ATP binding site. The DEAH box signature appears at 280 to 283 (DEAH). One can recognise a Helicase C-terminal domain in the interval 490–662 (RVEWLMGYLT…YLASPDQTEG (173 aa)).

Belongs to the SNF2/RAD54 helicase family. RapA subfamily. In terms of assembly, interacts with the RNAP. Has a higher affinity for the core RNAP than for the holoenzyme. Its ATPase activity is stimulated by binding to RNAP.

Transcription regulator that activates transcription by stimulating RNA polymerase (RNAP) recycling in case of stress conditions such as supercoiled DNA or high salt concentrations. Probably acts by releasing the RNAP, when it is trapped or immobilized on tightly supercoiled DNA. Does not activate transcription on linear DNA. Probably not involved in DNA repair. This is RNA polymerase-associated protein RapA from Shigella dysenteriae serotype 1 (strain Sd197).